Consider the following 364-residue polypeptide: Aminomethyltransferase (364 aa).

The protein belongs to the GcvT family. The glycine cleavage system is composed of four proteins: P, T, L and H.

It catalyses the reaction N(6)-[(R)-S(8)-aminomethyldihydrolipoyl]-L-lysyl-[protein] + (6S)-5,6,7,8-tetrahydrofolate = N(6)-[(R)-dihydrolipoyl]-L-lysyl-[protein] + (6R)-5,10-methylene-5,6,7,8-tetrahydrofolate + NH4(+). In terms of biological role, the glycine cleavage system catalyzes the degradation of glycine. The chain is Aminomethyltransferase from Bacillus licheniformis (strain ATCC 14580 / DSM 13 / JCM 2505 / CCUG 7422 / NBRC 12200 / NCIMB 9375 / NCTC 10341 / NRRL NRS-1264 / Gibson 46).